The following is a 135-amino-acid chain: Large ribosomal subunit protein uL16c (135 aa).

Residues 1 to 17 show a composition bias toward basic residues; the sequence is MLSPKRTRFRKQHRGRM. The segment at 1-20 is disordered; it reads MLSPKRTRFRKQHRGRMKGT.

This sequence belongs to the universal ribosomal protein uL16 family. As to quaternary structure, part of the 50S ribosomal subunit.

The protein localises to the plastid. It localises to the chloroplast. In Lemna minor (Common duckweed), this protein is Large ribosomal subunit protein uL16c.